The primary structure comprises 340 residues: Ketol-acid reductoisomerase (NADP(+)) (340 aa).

Positions 3 to 183 constitute a KARI N-terminal Rossmann domain; it reads VSIYYDKDCD…GGGRTGIIET (181 aa). Residues 26 to 29, Lys-49, Ser-54, and 84 to 87 each bind NADP(+); these read FGSQ and DEIQ. His-109 is a catalytic residue. Gly-135 lines the NADP(+) pocket. The KARI C-terminal knotted domain maps to 184–329; that stretch reads TFKAETETDL…RELRAMMPWI (146 aa). Residues Asp-192, Glu-196, Glu-228, and Glu-232 each coordinate Mg(2+). Ser-253 is a binding site for substrate.

It belongs to the ketol-acid reductoisomerase family. It depends on Mg(2+) as a cofactor.

The catalysed reaction is (2R)-2,3-dihydroxy-3-methylbutanoate + NADP(+) = (2S)-2-acetolactate + NADPH + H(+). It catalyses the reaction (2R,3R)-2,3-dihydroxy-3-methylpentanoate + NADP(+) = (S)-2-ethyl-2-hydroxy-3-oxobutanoate + NADPH + H(+). Its pathway is amino-acid biosynthesis; L-isoleucine biosynthesis; L-isoleucine from 2-oxobutanoate: step 2/4. It participates in amino-acid biosynthesis; L-valine biosynthesis; L-valine from pyruvate: step 2/4. Its function is as follows. Involved in the biosynthesis of branched-chain amino acids (BCAA). Catalyzes an alkyl-migration followed by a ketol-acid reduction of (S)-2-acetolactate (S2AL) to yield (R)-2,3-dihydroxy-isovalerate. In the isomerase reaction, S2AL is rearranged via a Mg-dependent methyl migration to produce 3-hydroxy-3-methyl-2-ketobutyrate (HMKB). In the reductase reaction, this 2-ketoacid undergoes a metal-dependent reduction by NADPH to yield (R)-2,3-dihydroxy-isovalerate. In Campylobacter lari (strain RM2100 / D67 / ATCC BAA-1060), this protein is Ketol-acid reductoisomerase (NADP(+)).